The chain runs to 346 residues: Putative agmatine deiminase (346 aa).

The Amidino-cysteine intermediate role is filled by Cys338.

This sequence belongs to the agmatine deiminase family.

It catalyses the reaction agmatine + H2O = N-carbamoylputrescine + NH4(+). This Streptomyces avermitilis (strain ATCC 31267 / DSM 46492 / JCM 5070 / NBRC 14893 / NCIMB 12804 / NRRL 8165 / MA-4680) protein is Putative agmatine deiminase.